Reading from the N-terminus, the 206-residue chain is uncharacterized protein (206 aa).

Positions 1-18 (MKTYSLLLGLFISFGVLA) are cleaved as a signal peptide.

This is an uncharacterized protein from Haemophilus influenzae (strain ATCC 51907 / DSM 11121 / KW20 / Rd).